A 318-amino-acid chain; its full sequence is NLP effector protein 7 (318 aa).

The first 19 residues, Met-1–Ala-19, serve as a signal peptide directing secretion. Residues Gln-23–Asp-41 are compositionally biased toward low complexity. 2 disordered regions span residues Gln-23–Lys-42 and Arg-51–Pro-96. A compositionally biased stretch (polar residues) spans Pro-55–Pro-65. The N-linked (GlcNAc...) asparagine glycan is linked to Asn-60. Residues Thr-73–Pro-96 are compositionally biased toward pro residues. The Conserved undecapeptide motif I signature appears at Ala-185–Asp-195. The Hepta-peptide GHRHDWE motif II signature appears at Gly-202–Glu-208.

It belongs to the Necrosis inducing protein (NPP1) family.

It localises to the secreted. Its function is as follows. Secreted effector that contributes moderately to virulence during infection by P.capsici. Does not cause visible reaction of C.annuum for several days after inoculation, but by 7 days after inoculation, small necrotic lesions become visible. Leads only to chlorotic areas, without necrosis at 7 days after non-host N.benthamiana leaves infection. The chain is NLP effector protein 7 from Phytophthora capsici.